Consider the following 152-residue polypeptide: Transcriptional repressor NrdR (152 aa).

The segment at 3–34 is a zinc-finger region; the sequence is CPYCQHPDSDVIDTRKLHNGETIRRRRKCEAC. The ATP-cone domain maps to 49-139; it reads ITVVKKNGER…VYRSFADIGK (91 aa).

Belongs to the NrdR family. It depends on Zn(2+) as a cofactor.

Its function is as follows. Negatively regulates transcription of bacterial ribonucleotide reductase nrd genes and operons by binding to NrdR-boxes. This chain is Transcriptional repressor NrdR, found in Roseiflexus sp. (strain RS-1).